Reading from the N-terminus, the 1519-residue chain is MTHQNTETASLATTKGALEPLPPDKTAGLSTGAGHEISSDESEGSEEETGLHKDPSQRQRQQNATFQAFLSHHAETIVNSPVKPNQAQSELSISSLIGRNASGTGILNPREYQIELFERAKVQNTIAVLDTGSGKTLIAVLLLKHVIQTELIDRANGNPPRISFFLVDSVTLVYQQASVLRNNLDQNVAHFFGAMGVDLWNKQTWAEHFEKNMVIVCTAEILNQCLLNAYITMQQINLLVFDEAHHTKKDHPYARIIRDSYLRVPPSSRPRIFGMTASPVDTKGDVLEAARNLEALLDSKIATTSKLTILRQVVNRPNEEVWIYDKLQPTFTSDLYKLMESRFGDISHLEPMFRFARHATSELGTWCADRVWVSALADDVLPKVEGSIGGKRQSTGLGQLPKDVHRDITRIKEASELVESHPPNDPGAPEALSSKVRVLWKEISQCFGQETNTKCIVFTEKRYTAKVLFDLFTVLNVPGLRPGVLIGVRSSDRIGMNVTFRQQILTMVRFRTGEINCLFATAVAEEGLDIPDCNLVVRFDLYKTLIQYVQSRGRARHADSTYASMIEKDNADHESILVQVNDAEKIMQSFCQLLPEDRILHGNDDDTDAVLDREEWEEPYTLPSTAARLTHHSAITVLARYASSLQYENDTSAQVTYVVLPVNDAYVCEVILPEKSPIRGATGMPAMKKSTAKRYAAFEACRLLRKHRLLDEYLNSVYHRRLPAMRNARLAITSHRTNEYKILPKSSLWNKQIGVIPGKLYGTVISLKPLTPLAREHGSMILFTRDRLPQFPTFPIFLGEDVETIVLTVPVNMELQPSADELDYMTTFTLRIFRDVFRKTYDKEPEKLPYWLLPAISFPCNQEADPRDVVNWEILSSVHERDDIEYQADMPPEMLVDRFVYDHWDGRYRYFTLAVDENLQPSSPPPSHVARRRHMDTIMNYSISLSKNSRAKFLSRCNWNQPVLHAELVRLRRNLLDRMTDKERKLETRSVICIEPLKISAIPAAIAATCLAFPAIISRLDAYLIGLEACKKLGLEISLEYALEALTKDSDNTHEHRSQQVHMQRGMGKNYERLEFLGDCFLKMATSISLFNQHPDDNEFDYHVNRMCLICNRNLFNSAVKKELYQFIRSRGFSRDTWYPEGLTLLQGRDHSKKIGSESKHALAEKTIADVCEALIGAALLTPGPQHRFDMGVRAVSAVVDSNEHNAASWRDYISLYSIPKYQEQAPDGSEIDLCRRVEEKLGYHFRYPRLLHSAFTHPSYPSAWARVPCYQSLEFLGDALLDMVCVEDLFRRFPDRDPQWLTEHKMAMVSNKFLGALAVKLGLHTHLSYFSSALQSQITHYAEEAQAAASQSDVAVDYWTLTQDPPKVCLPDMVEAYLGAVFVDSNFRFEEVEVFFQQHIKPYFHDMAIYDTFANRHPTTFLHNKLTNEYGCLNYCLKAGEIPGADGDASTVLAAVIVHDTILTTGVASSGRYAKVKASENALTELLHIDRNEFRKRYQCDCVQENGEHGERDVGTPI.

Over residues 1-13 (MTHQNTETASLAT) the composition is skewed to polar residues. Residues 1 to 62 (MTHQNTETAS…KDPSQRQRQQ (62 aa)) form a disordered region. Over residues 39–48 (SDESEGSEEE) the composition is skewed to acidic residues. The Helicase ATP-binding domain occupies 116–297 (LFERAKVQNT…EAARNLEALL (182 aa)). 129-136 (LDTGSGKT) lines the ATP pocket. Residues 242 to 245 (DEAH) carry the DEAH box motif. Residues 431-601 (ALSSKVRVLW…QLLPEDRILH (171 aa)) form the Helicase C-terminal domain. A Dicer dsRNA-binding fold domain is found at 634 to 724 (AITVLARYAS…NSVYHRRLPA (91 aa)). Residues 882–1001 (DDIEYQADMP…ICIEPLKISA (120 aa)) enclose the PAZ domain. RNase III domains are found at residues 1026-1184 (GLEA…LTPG) and 1235-1387 (CRRV…VDSN). Mg(2+)-binding residues include Glu-1275, Asp-1373, and Glu-1376. Residues 1421 to 1489 (TFLHNKLTNE…SENALTELLH (69 aa)) enclose the DRBM domain. Zn(2+) contacts are provided by Cys-1433, His-1460, Cys-1501, and Cys-1503.

This sequence belongs to the helicase family. Dicer subfamily. The cofactor is Mg(2+). Requires Mn(2+) as cofactor.

Its function is as follows. Dicer-like endonuclease involved in cleaving double-stranded RNA in the RNA interference (RNAi) pathway. Produces 21 to 25 bp dsRNAs (siRNAs) which target the selective destruction of homologous RNAs leading to sequence-specific suppression of gene expression, called post-transcriptional gene silencing (PTGS). Part of a broad host defense response against viral infection and transposons. The polypeptide is Dicer-like protein 1 (dcl1) (Aspergillus terreus (strain NIH 2624 / FGSC A1156)).